The chain runs to 261 residues: MEDLAKFLFGVSGNVIALFLFLSPVPTFWRIIRRKSTEDFSGVPYNMTLINCLLSAWYGLPFVSPNNILVSTINGAGAVIETAYVVVFLVFASTHKTRLRTLGLAAAVASVFAAVALVSLLALHGQHRKLLCGVAATVCSICMYASPLSIMRLVIKTKSVEYMPFLMSLAVFLCGTSWFIYGLLGRDPFVTIPNGCGSFLGAVQLVLYAIYRNNKGAGGGSGGKQAGDDDVEMAEGRNNKVADGGAADDDSTAGGKAGTEV.

The Extracellular segment spans residues 1–6 (MEDLAK). Residues 7–27 (FLFGVSGNVIALFLFLSPVPT) form a helical membrane-spanning segment. The MtN3/slv 1 domain maps to 7–95 (FLFGVSGNVI…VVFLVFASTH (89 aa)). The Cytoplasmic segment spans residues 28–42 (FWRIIRRKSTEDFSG). A helical membrane pass occupies residues 43 to 63 (VPYNMTLINCLLSAWYGLPFV). The Extracellular portion of the chain corresponds to 64-71 (SPNNILVS). Residues 72 to 92 (TINGAGAVIETAYVVVFLVFA) form a helical membrane-spanning segment. The Cytoplasmic segment spans residues 93–101 (STHKTRLRT). The helical transmembrane segment at 102 to 122 (LGLAAAVASVFAAVALVSLLA) threads the bilayer. At 123–129 (LHGQHRK) the chain is on the extracellular side. A helical transmembrane segment spans residues 130–150 (LLCGVAATVCSICMYASPLSI). The MtN3/slv 2 domain maps to 133–215 (GVAATVCSIC…VLYAIYRNNK (83 aa)). Residues 151–164 (MRLVIKTKSVEYMP) lie on the Cytoplasmic side of the membrane. The helical transmembrane segment at 165–185 (FLMSLAVFLCGTSWFIYGLLG) threads the bilayer. Residues 186 to 189 (RDPF) are Extracellular-facing. A helical membrane pass occupies residues 190 to 210 (VTIPNGCGSFLGAVQLVLYAI). Residues 211 to 261 (YRNNKGAGGGSGGKQAGDDDVEMAEGRNNKVADGGAADDDSTAGGKAGTEV) lie on the Cytoplasmic side of the membrane. A disordered region spans residues 218–261 (GGGSGGKQAGDDDVEMAEGRNNKVADGGAADDDSTAGGKAGTEV).

It belongs to the SWEET sugar transporter family. In terms of assembly, forms homodimers. Highly expressed in leaves. Expressed at very low levels in roots, stems and panicles.

It is found in the cell membrane. The enzyme catalyses D-glucose(out) = D-glucose(in). It carries out the reaction D-galactose(in) = D-galactose(out). Its function is as follows. Mediates transport of sugars across the plasma membrane. Can transport glucose and galactose, but not fructose, mannose and sucrose. This Oryza sativa subsp. japonica (Rice) protein is Bidirectional sugar transporter SWEET1b (SWEET1B).